The following is a 212-amino-acid chain: Adenylate kinase (212 aa).

Residue 14–19 participates in ATP binding; that stretch reads GSGKGT. Residues 34–63 form an NMP region; that stretch reads STGDLFRKKISEDSRFAAQIQNYLSSGSYV. Residues threonine 35, arginine 40, 61 to 63, 89 to 92, and glutamine 96 contribute to the AMP site; these read SYV and GYPR. An LID region spans residues 126–163; that stretch reads QRLFCQKCQKSYNLLLAKPKNGLKCDLDNTDLITRNDD. Arginine 127 lines the ATP pocket. 2 residues coordinate Zn(2+): cysteine 130 and cysteine 133. Residue 136 to 137 coordinates ATP; the sequence is SY. The Zn(2+) site is built by cysteine 150 and aspartate 153. AMP-binding residues include arginine 160 and arginine 171. Position 199 (glutamine 199) interacts with ATP.

This sequence belongs to the adenylate kinase family. Monomer.

The protein localises to the cytoplasm. The catalysed reaction is AMP + ATP = 2 ADP. The protein operates within purine metabolism; AMP biosynthesis via salvage pathway; AMP from ADP: step 1/1. In terms of biological role, catalyzes the reversible transfer of the terminal phosphate group between ATP and AMP. Plays an important role in cellular energy homeostasis and in adenine nucleotide metabolism. This is Adenylate kinase from Mesomycoplasma hyopneumoniae (strain 232) (Mycoplasma hyopneumoniae).